A 795-amino-acid polypeptide reads, in one-letter code: ATP-dependent RNA helicase DHX15 (795 aa).

Residues 1-108 (MSKRHRLDLG…HSTHAGHAGH (108 aa)) form a disordered region. Phosphoserine is present on Ser-15. A compositionally biased stretch (basic and acidic residues) spans 20 to 62 (AGTDGKDRDRDRDREDRSKDRDRERDRGDREREREKEKEKELR). The segment covering 79–108 (ASHSAHSTHSAHSTHSTHSAHSTHAGHAGH) has biased composition (low complexity). The 167-residue stretch at 147-313 (TDILVRHQSF…FDNCPLLTIP (167 aa)) folds into the Helicase ATP-binding domain. 160–167 (GETGSGKT) is an ATP binding site. The DEAH box signature appears at 260-263 (DEAH). A Helicase C-terminal domain is found at 338-518 (TVIQIHMCEE…SVVLQLKKLG (181 aa)). Lys-488 is modified (N6-acetyllysine). Lys-786 is covalently cross-linked (Glycyl lysine isopeptide (Lys-Gly) (interchain with G-Cter in SUMO2)).

Belongs to the DEAD box helicase family. DEAH subfamily. DDX15/PRP43 sub-subfamily. Component of the U11/U12 snRNPs that are part of the U12-type spliceosome. Identified in the Intron Large spliceosome complex (IL, also named intron lariat spliceosome), a post-mRNA release spliceosomal complex containing the excised intron, U2, U5 and U6 snRNPs, and splicing factors; the association may be transient. The IL complex exists in two distinct conformations, one with the DHX15 (ILS2) and one without (ILS1). Interacts with TFIP11 (via G-patch domain); indicative for a recruitment to the IL complex. Interacts with SSB/La. Interacts with GPATCH2 (via G-patch domain); promoting the RNA helicase activity. Interacts with NKRF (via G-patch domain); promoting the RNA helicase activity. Interacts with NLRP6. As to expression, ubiquitous.

It localises to the nucleus. It is found in the nucleolus. The enzyme catalyses ATP + H2O = ADP + phosphate + H(+). ATPase activity is enhanced upon binding to G-patch domain-containing proteins. G-patch domain-containing proteins act like a brace that tethers mobile sections of DHX15 together, stabilizing a functional conformation with high RNA affinity, thereby promoting the ATPase activity. Its function is as follows. RNA helicase involved in mRNA processing and antiviral innate immunity. Pre-mRNA processing factor involved in disassembly of spliceosomes after the release of mature mRNA. In cooperation with TFIP11 seem to be involved in the transition of the U2, U5 and U6 snRNP-containing IL complex to the snRNP-free IS complex leading to efficient debranching and turnover of excised introns. Plays a key role in antiviral innate immunity by promoting both MAVS-dependent signaling and NLRP6 inflammasome. Acts as an RNA virus sensor: recognizes and binds viral double stranded RNA (dsRNA) and activates the MAVS-dependent signaling to produce interferon-beta and interferon lambda-3 (IFNL3). Involved in intestinal antiviral innate immunity together with NLRP6: recognizes and binds viral dsRNA and promotes activation of the NLRP6 inflammasome in intestinal epithelial cells to restrict infection by enteric viruses. The NLRP6 inflammasome acts by promoting maturation and secretion of IL18 in the extracellular milieu. Also involved in antibacterial innate immunity by promoting Wnt-induced antimicrobial protein expression in Paneth cells. This Homo sapiens (Human) protein is ATP-dependent RNA helicase DHX15.